Here is a 295-residue protein sequence, read N- to C-terminus: Acetylglutamate kinase (295 aa).

Substrate contacts are provided by residues 70–71 (GG), arginine 92, and asparagine 191.

This sequence belongs to the acetylglutamate kinase family. ArgB subfamily.

The protein resides in the cytoplasm. It catalyses the reaction N-acetyl-L-glutamate + ATP = N-acetyl-L-glutamyl 5-phosphate + ADP. Its pathway is amino-acid biosynthesis; L-arginine biosynthesis; N(2)-acetyl-L-ornithine from L-glutamate: step 2/4. Catalyzes the ATP-dependent phosphorylation of N-acetyl-L-glutamate. The sequence is that of Acetylglutamate kinase from Mycobacterium avium (strain 104).